A 207-amino-acid polypeptide reads, in one-letter code: MSQGILFIISAPSGTGKSSLIEGLLKTKFLYNIQVSISHTTRVMRPGESHGKHYYFISKKEFRIMIKQESFLEYAKVFNNYYGTSRQSIEKMLLSGIDVFLDIDWQGANQIRYKMPNSKSIFLLPPSKDELYKRLRERGQDSDTVISKRMEKAVDEMNHYSEYDYLIINDDFQKAINDLRTIIIAEHLCLFHQKNKHNVLISQLLKS.

In terms of domain architecture, Guanylate kinase-like spans 4 to 184 (GILFIISAPS…AINDLRTIII (181 aa)). 11–18 (APSGTGKS) contributes to the ATP binding site.

The protein belongs to the guanylate kinase family.

Its subcellular location is the cytoplasm. The catalysed reaction is GMP + ATP = GDP + ADP. In terms of biological role, essential for recycling GMP and indirectly, cGMP. The polypeptide is Guanylate kinase (Buchnera aphidicola subsp. Schizaphis graminum (strain Sg)).